Consider the following 450-residue polypeptide: Phosphoglucosamine mutase (450 aa).

Serine 102 acts as the Phosphoserine intermediate in catalysis. Residues serine 102, aspartate 243, aspartate 245, and aspartate 247 each coordinate Mg(2+). Serine 102 is subject to Phosphoserine.

Belongs to the phosphohexose mutase family. It depends on Mg(2+) as a cofactor. Post-translationally, activated by phosphorylation.

It catalyses the reaction alpha-D-glucosamine 1-phosphate = D-glucosamine 6-phosphate. In terms of biological role, catalyzes the conversion of glucosamine-6-phosphate to glucosamine-1-phosphate. The polypeptide is Phosphoglucosamine mutase (Rhizobium etli (strain ATCC 51251 / DSM 11541 / JCM 21823 / NBRC 15573 / CFN 42)).